Here is a 336-residue protein sequence, read N- to C-terminus: Holliday junction branch migration complex subunit RuvB (336 aa).

The large ATPase domain (RuvB-L) stretch occupies residues Ala4–Tyr184. Residues Arg24, Gly65, Lys68, Thr69, Thr70, Glu131–Tyr133, Arg174, Tyr184, and Arg221 contribute to the ATP site. Thr69 serves as a coordination point for Mg(2+). The tract at residues Asn185–Asp255 is small ATPAse domain (RuvB-S). The segment at Asp258 to Ala336 is head domain (RuvB-H). The DNA site is built by Arg294, Arg313, and Arg318.

Belongs to the RuvB family. Homohexamer. Forms an RuvA(8)-RuvB(12)-Holliday junction (HJ) complex. HJ DNA is sandwiched between 2 RuvA tetramers; dsDNA enters through RuvA and exits via RuvB. An RuvB hexamer assembles on each DNA strand where it exits the tetramer. Each RuvB hexamer is contacted by two RuvA subunits (via domain III) on 2 adjacent RuvB subunits; this complex drives branch migration. In the full resolvosome a probable DNA-RuvA(4)-RuvB(12)-RuvC(2) complex forms which resolves the HJ.

The protein resides in the cytoplasm. It catalyses the reaction ATP + H2O = ADP + phosphate + H(+). Functionally, the RuvA-RuvB-RuvC complex processes Holliday junction (HJ) DNA during genetic recombination and DNA repair, while the RuvA-RuvB complex plays an important role in the rescue of blocked DNA replication forks via replication fork reversal (RFR). RuvA specifically binds to HJ cruciform DNA, conferring on it an open structure. The RuvB hexamer acts as an ATP-dependent pump, pulling dsDNA into and through the RuvAB complex. RuvB forms 2 homohexamers on either side of HJ DNA bound by 1 or 2 RuvA tetramers; 4 subunits per hexamer contact DNA at a time. Coordinated motions by a converter formed by DNA-disengaged RuvB subunits stimulates ATP hydrolysis and nucleotide exchange. Immobilization of the converter enables RuvB to convert the ATP-contained energy into a lever motion, pulling 2 nucleotides of DNA out of the RuvA tetramer per ATP hydrolyzed, thus driving DNA branch migration. The RuvB motors rotate together with the DNA substrate, which together with the progressing nucleotide cycle form the mechanistic basis for DNA recombination by continuous HJ branch migration. Branch migration allows RuvC to scan DNA until it finds its consensus sequence, where it cleaves and resolves cruciform DNA. In Shewanella frigidimarina (strain NCIMB 400), this protein is Holliday junction branch migration complex subunit RuvB.